A 152-amino-acid chain; its full sequence is Actin-depolymerizing factor 2, isoform c (152 aa).

One can recognise an ADF-H domain in the interval 4-147 (GVKVDPSCKN…DEKSVKSDLM (144 aa)).

This sequence belongs to the actin-binding proteins ADF family.

In terms of biological role, depolymerizes growing actin filaments in muscle cells; required for the assembly of actin filaments into the functional contractile myofilament lattice of muscle. This chain is Actin-depolymerizing factor 2, isoform c, found in Caenorhabditis elegans.